Consider the following 529-residue polypeptide: UDP-glycosyltransferase (529 aa).

Asn-70 and Asn-420 each carry an N-linked (GlcNAc...) asparagine glycan. A helical transmembrane segment spans residues 504-524 (LDLYLVYIALFAVPVGAVRWI).

This sequence belongs to the glycosyltransferase 28 family.

Its subcellular location is the membrane. The enzyme catalyses stromemycin aglycone + UDP-alpha-D-glucose = stromemycin + UDP + H(+). It participates in mycotoxin biosynthesis. Functionally, UDP-glycosyltransferase; part of the gene cluster that mediates the biosynthesis of stromemycin, a depside C-glucoside with two unsaturated C9 side chains belonging to aromatic polyketide glycosides. Acts as the tailoring enzyme responsible for 3-C-glucosylation of bininalkenylresorcylic acid to yield stromemycin. The sequence is that of UDP-glycosyltransferase from Talaromyces amestolkiae.